The primary structure comprises 142 residues: uncharacterized protein (142 aa).

An N-acetyltransferase domain is found at Ile2–Val142.

It belongs to the acetyltransferase family.

This is an uncharacterized protein from Bacillus subtilis (strain 168).